A 441-amino-acid polypeptide reads, in one-letter code: uncharacterized protein (441 aa).

The next 12 membrane-spanning stretches (helical) occupy residues 21 to 41, 51 to 71, 94 to 114, 118 to 138, 150 to 170, 195 to 215, 239 to 259, 260 to 280, 291 to 311, 334 to 354, 363 to 383, and 419 to 439; these read VVVA…MSLG, LGGG…AVAI, AAST…VTMS, VIPV…GVFA, VLTF…GGIF, AMLL…FVSY, QHIL…LYTG, SMII…VIAW, VHMM…AAVM, LAAL…GSSF, IYVP…ALVG, and VVPT…IAAM.

The protein localises to the cell membrane. This is an uncharacterized protein from Vibrio parahaemolyticus serotype O3:K6 (strain RIMD 2210633).